The following is a 347-amino-acid chain: MSEQTIRLTQYSHGAGCGCKISPKVLETILHSEQAKFVDPNLLVGNETRDDAAVYDLGNGTSVISTTDFFMPIVDNPFDFGRIAATNAISDIFAMGGKPIMAIAILGWPINTLAPEIAREVIEGGRFACQQAGIALAGGHSIDAPEPIFGLAVTGIVPTERVKRNSTAQPGCKLFLTKPLGIGVLTTAEKKSLLKPEHIGLATEVMCQMNLAGAAFANIDGVKAMTDVTGFGLLGHLSEVCQGAGVQAQIVYQEIPKLPGVEEYIAQGAVPGGTQRNFASYGHLMGEMPVEWRDLLCDPQTSGGLLLAVTPESETEVKATAAEFGITLTAIGELVTARGGRPMIEIR.

Residue C17 is part of the active site. ATP is bound by residues K20 and T48–D50. Residue D51 coordinates Mg(2+). ATP-binding positions include D68, D91, and G139–S141. D91 contacts Mg(2+). Mg(2+) is bound at residue D227.

This sequence belongs to the selenophosphate synthase 1 family. Class I subfamily. As to quaternary structure, homodimer. Requires Mg(2+) as cofactor.

It carries out the reaction hydrogenselenide + ATP + H2O = selenophosphate + AMP + phosphate + 2 H(+). In terms of biological role, synthesizes selenophosphate from selenide and ATP. This chain is Selenide, water dikinase, found in Enterobacter sp. (strain 638).